Reading from the N-terminus, the 1305-residue chain is Cyclin-G-associated kinase (1305 aa).

At Ser2 the chain carries N-acetylserine. Phosphoserine occurs at positions 2 and 16. Residues Leu40–Glu315 enclose the Protein kinase domain. The Proton acceptor role is filled by Asp173. The interval Leu332 to Val354 is disordered. The Phosphatase tensin-type domain maps to Ser397–Glu564. Residue Ser454 is modified to Phosphoserine. The 139-residue stretch at Ser570–Glu708 folds into the C2 tensin-type domain. A disordered region spans residues Phe747–Gln856. The residue at position 768 (Ser768) is a Phosphoserine. Thr774 is modified (phosphothreonine). The segment covering Ser776 to Phe789 has biased composition (polar residues). Phosphoserine is present on Ser781. Thr792 carries the phosphothreonine modification. Residues Val805–Leu817 are compositionally biased toward polar residues. Residues Ser809, Ser824, and Ser827 each carry the phosphoserine modification. Positions Asp822–Ala832 are enriched in acidic residues. The span at Ser836 to Pro848 shows a compositional bias: basic and acidic residues. The residue at position 938 (Ser938) is a Phosphoserine. Positions Leu1044–Ser1141 are disordered. The segment covering Val1105–Pro1131 has biased composition (polar residues). Arg1122 is modified (omega-N-methylarginine). Residue Ser1171 is modified to Phosphoserine. Residues Ser1241 to Phe1305 form the J domain.

The protein belongs to the protein kinase superfamily. Ser/Thr protein kinase family.

The protein resides in the cytoplasm. It localises to the perinuclear region. The protein localises to the golgi apparatus. Its subcellular location is the trans-Golgi network. It is found in the cell junction. The protein resides in the focal adhesion. It localises to the cytoplasmic vesicle. The protein localises to the clathrin-coated vesicle. It catalyses the reaction L-seryl-[protein] + ATP = O-phospho-L-seryl-[protein] + ADP + H(+). It carries out the reaction L-threonyl-[protein] + ATP = O-phospho-L-threonyl-[protein] + ADP + H(+). Associates with cyclin G and CDK5. Seems to act as an auxilin homolog that is involved in the uncoating of clathrin-coated vesicles by Hsc70 in non-neuronal cells. Expression oscillates slightly during the cell cycle, peaking at G1. May play a role in clathrin-mediated endocytosis and intracellular trafficking, and in the dynamics of clathrin assembly/disassembly. This chain is Cyclin-G-associated kinase, found in Rattus norvegicus (Rat).